Reading from the N-terminus, the 428-residue chain is D-amino acid dehydrogenase (428 aa).

3 to 17 (VVILGSGVVGVASAY) contacts FAD.

Belongs to the DadA oxidoreductase family. It depends on FAD as a cofactor.

It carries out the reaction a D-alpha-amino acid + A + H2O = a 2-oxocarboxylate + AH2 + NH4(+). It functions in the pathway amino-acid degradation; D-alanine degradation; NH(3) and pyruvate from D-alanine: step 1/1. Its function is as follows. Oxidative deamination of D-amino acids. This chain is D-amino acid dehydrogenase, found in Burkholderia cenocepacia (strain HI2424).